A 581-amino-acid polypeptide reads, in one-letter code: MTGLGVRSSSYGSLEKTGLNGVVLPIQITTTTRTKPSKMQKDREGIVHWICKFAGRKKVGMLLLFLISAVVFLRVLYVGKGEDSQEGQGPPSLHFNGSSGVNYSNMLQTNEELNMNIGNISFKAKEVIVFPPPPIHFLGYSLPQGHPCNSFTLPPPPADRKRTGPRPCPVCYLPVEEAVALMPNAPSFSPVLKNLTYIYEEPLNRETEFGGSDFGGYPTLKHRNDSFDIKETMSVHCGFVKGPQPGRNTGFDIDEADLLEMKQCRGIVVASAVFDAFDDVKAPQNISKYAEETVCFYMFVDEETESILKRERGLDGNKKVGIWRVVVVHNLPYSDGRRNGKVPKLLVHRMFPNARYSLWIDGKLELVVDPYQILERFLWRKNATFAISRHYKRFDVLVEAEANKAAGKYDNASIDFQVDFYKNEGLTPYSVAKLPITSDVPEGCVILREHVPISNLFTCLWFNEVDRFTSRDQISFSTVRDKIAAKTNWTVSMFLDCERRNFVVQRYHRAEQERFARQRPPVPNFPPPPPSPPPPVLISSDLPRKMSSGRATPPRRRGRDRRSGQRGHRKANLPVRLPDSA.

Topologically, residues 1–58 (MTGLGVRSSSYGSLEKTGLNGVVLPIQITTTTRTKPSKMQKDREGIVHWICKFAGRKK) are cytoplasmic. A helical; Signal-anchor for type II membrane protein transmembrane segment spans residues 59–79 (VGMLLLFLISAVVFLRVLYVG). Topologically, residues 80 to 581 (KGEDSQEGQG…NLPVRLPDSA (502 aa)) are lumenal. N-linked (GlcNAc...) asparagine glycans are attached at residues asparagine 96, asparagine 102, asparagine 119, asparagine 194, asparagine 224, asparagine 285, asparagine 382, asparagine 411, and asparagine 488. The tract at residues 514-581 (RFARQRPPVP…NLPVRLPDSA (68 aa)) is disordered. The span at 520–536 (PPVPNFPPPPPSPPPPV) shows a compositional bias: pro residues. The segment covering 553–571 (PPRRRGRDRRSGQRGHRKA) has biased composition (basic residues).

The protein belongs to the glycosyltransferase 8 family. As to expression, expressed in siliques and seeds.

Its subcellular location is the golgi apparatus membrane. It functions in the pathway glycan metabolism; pectin biosynthesis. In terms of biological role, probable glycosyltransferase involved in pectin and/or xylans biosynthesis in cell walls. Together with IRX14, required for xylan and pectin synthesis in seed coat epidermal (SCE) cells. Collaboratively with GAUT11, essential for the accumulation of seed mucilage, a gelatinous wall rich in unbranched rhamnogalacturonan I (RG I), and for shaping the surface morphology of seeds. This Arabidopsis thaliana (Mouse-ear cress) protein is Probable hexosyltransferase MUCI70.